A 421-amino-acid polypeptide reads, in one-letter code: DNA (cytosine-5)-methyltransferase 3-like (421 aa).

A compositionally biased stretch (polar residues) spans 1–14 (MGSRETPSSCSKTL). The disordered stretch occupies residues 1–39 (MGSRETPSSCSKTLETLDLETSDSSSPDADSPLEEQWLK). The region spanning 75–207 (EVKVNRRSIE…LKAFHDQEGA (133 aa)) is the ADD domain. The segment at 86–116 (ICLCCGTLQVYTRHPLFEGGLCAPCKDKFLE) adopts a GATA-type; atypical zinc-finger fold. Residues 127 to 183 (QSYCTICCSGGTLFICESPDCTRCYCFECVDILVGPGTSERINAMACWVCFLCLPFS) form a PHD-type; atypical zinc finger.

Homodimer. Heterotetramer composed of 1 DNMT3A homodimer and 2 DNMT3L subunits (DNMT3L-DNMT3A-DNMT3A-DNMT3L). Interacts with histone H3 (via N-terminus); interaction is strongly inhibited by methylation at lysine 4 (H3K4me). Interacts with EZH2; the interaction is direct. Interacts with SPOCD1. As to expression, expressed in testis, thymus, ovary, and heart.

It localises to the nucleus. Its function is as follows. Catalytically inactive regulatory factor of DNA methyltransferases that can either promote or inhibit DNA methylation depending on the context. Essential for the function of DNMT3A and DNMT3B: activates DNMT3A and DNMT3B by binding to their catalytic domain. Acts by accelerating the binding of DNA and S-adenosyl-L-methionine (AdoMet) to the methyltransferases and dissociates from the complex after DNA binding to the methyltransferases. Recognizes unmethylated histone H3 lysine 4 (H3K4me0) and induces de novo DNA methylation by recruitment or activation of DNMT3. Plays a key role in embryonic stem cells and germ cells. In germ cells, required for the methylation of imprinted loci together with DNMT3A. In male germ cells, specifically required to methylate retrotransposons, preventing their mobilization. Plays a key role in embryonic stem cells (ESCs) by acting both as an positive and negative regulator of DNA methylation. While it promotes DNA methylation of housekeeping genes together with DNMT3A and DNMT3B, it also acts as an inhibitor of DNA methylation at the promoter of bivalent genes. Interacts with the EZH2 component of the PRC2/EED-EZH2 complex, preventing interaction of DNMT3A and DNMT3B with the PRC2/EED-EZH2 complex, leading to maintain low methylation levels at the promoters of bivalent genes. Promotes differentiation of ESCs into primordial germ cells by inhibiting DNA methylation at the promoter of RHOX5, thereby activating its expression. This chain is DNA (cytosine-5)-methyltransferase 3-like (Dnmt3l), found in Mus musculus (Mouse).